A 306-amino-acid polypeptide reads, in one-letter code: Polyadenylate-binding protein 2 (306 aa).

Residues 1-12 show a composition bias toward low complexity; the sequence is MAAAAAAAAAAG. Positions 1–115 are disordered; sequence MAAAAAAAAA…EGDPGDGAIE (115 aa). Position 2 is an N-acetylalanine (alanine 2). The segment at 2–145 is interaction with SKIP; sequence AAAAAAAAAA…LKELQNEVEK (144 aa). Omega-N-methylarginine is present on arginine 17. Serine 19 is subject to Phosphoserine. Positions 30–47 are enriched in gly residues; that stretch reads GAGGEAGEGAPGGAGDYG. The span at 51-72 shows a compositional bias: acidic residues; sequence ESEELEPEELLLEPEPEPEPEE. Phosphoserine is present on serine 52. Residues 77–87 are compositionally biased toward pro residues; the sequence is PRAPPGAPGPG. Residues 115 to 151 adopt a coiled-coil conformation; the sequence is EDPELEAIKARVREMEEEAEKLKELQNEVEKQMNMSP. Residues 119-147 form a stimulates PAPOLA region; the sequence is LEAIKARVREMEEEAEKLKELQNEVEKQM. Phosphoserine occurs at positions 150 and 235. Residues 155-306 form a necessary for homooligomerization region; sequence NAGPVIMSIE…ARATSWYSPY (152 aa). The region spanning 172–249 is the RRM domain; it reads RSIYVGNVDY…RQIKVIPKRT (78 aa). Arginine 238, arginine 259, and arginine 263 each carry asymmetric dimethylarginine; alternate. Arginine 238, arginine 259, and arginine 263 each carry omega-N-methylarginine; alternate. Residues arginine 265, arginine 267, arginine 269, arginine 277, arginine 279, arginine 287, arginine 289, arginine 291, arginine 294, arginine 296, and arginine 298 each carry the asymmetric dimethylarginine modification. Residues 286 to 306 are interaction with PAPOLA; the sequence is SRPRGRVYRGRARATSWYSPY.

As to quaternary structure, monomer and homooligomer. Binds RNA as a monomer and oligomerizes when bound to poly(A). Associates in a ternary complex with CPSF4 and NS/NS1 and interaction with NS/NS1, blocks nuclear export of host cell mRNAs. Associates in a single complex with SKIP and MYOD1 and interacts with SKIP in differentiated myocytes. Interacts with NUDT21/CPSF5. Identified in a IGF2BP1-dependent mRNP granule complex containing untranslated mRNAs. Interacts with PAPOLA, but only in presence of oligo(A) RNA. Interacts with transportin. May interact with SETX. Interacts (via RRM domain and C-terminal arginine-rich region) with ZFP36 (via hypophosphorylated form); this interaction occurs in the nucleus in a RNA-independent manner, decreases in presence of single-stranded poly(A) RNA-oligomer and in a p38-dependent-manner and may down-regulated RNA poly(A) polymerase activity. Component of the poly(A) tail exosome targeting (PAXT) complex composed of PABPN1, ZFC3H1 and MTREX. Interacts with ZFC3H1 in a RNase-insensitive manner. Interacts with FRG1. Interacts with ZC3H11A. Arginine dimethylation is asymmetric and involves PRMT1 and PRMT3. It does not influence the RNA binding properties. Ubiquitous.

It is found in the nucleus. The protein localises to the cytoplasm. Its subcellular location is the nucleus speckle. Functionally, involved in the 3'-end formation of mRNA precursors (pre-mRNA) by the addition of a poly(A) tail of 200-250 nt to the upstream cleavage product. Stimulates poly(A) polymerase (PAPOLA) conferring processivity on the poly(A) tail elongation reaction and also controls the poly(A) tail length. Increases the affinity of poly(A) polymerase for RNA. Is also present at various stages of mRNA metabolism including nucleocytoplasmic trafficking and nonsense-mediated decay (NMD) of mRNA. Cooperates with SKIP to synergistically activate E-box-mediated transcription through MYOD1 and may regulate the expression of muscle-specific genes. Binds to poly(A) and to poly(G) with high affinity. May protect the poly(A) tail from degradation. Subunit of the trimeric poly(A) tail exosome targeting (PAXT) complex, a complex that directs a subset of long and polyadenylated poly(A) RNAs for exosomal degradation. The RNA exosome is fundamental for the degradation of RNA in eukaryotic nuclei. Substrate targeting is facilitated by its cofactor MTREX, which links to RNA-binding protein adapters. The chain is Polyadenylate-binding protein 2 (PABPN1) from Bos taurus (Bovine).